We begin with the raw amino-acid sequence, 513 residues long: ATP synthase subunit alpha (513 aa).

169-176 (GDRQIGKT) contacts ATP.

The protein belongs to the ATPase alpha/beta chains family. F-type ATPases have 2 components, CF(1) - the catalytic core - and CF(0) - the membrane proton channel. CF(1) has five subunits: alpha(3), beta(3), gamma(1), delta(1), epsilon(1). CF(0) has three main subunits: a(1), b(2) and c(9-12). The alpha and beta chains form an alternating ring which encloses part of the gamma chain. CF(1) is attached to CF(0) by a central stalk formed by the gamma and epsilon chains, while a peripheral stalk is formed by the delta and b chains.

The protein resides in the cell inner membrane. It catalyses the reaction ATP + H2O + 4 H(+)(in) = ADP + phosphate + 5 H(+)(out). Its function is as follows. Produces ATP from ADP in the presence of a proton gradient across the membrane. The alpha chain is a regulatory subunit. This is ATP synthase subunit alpha from Francisella tularensis subsp. tularensis (strain WY96-3418).